A 728-amino-acid polypeptide reads, in one-letter code: Putative auxin response factor 20 (728 aa).

The TF-B3 1 DNA-binding region spans 119–233 (FFEKQLSPAD…ELLVGVRRAP (115 aa)). Composition is skewed to low complexity over residues 665–689 (PQGS…TTSA) and 700–712 (ASSS…IIPS). A disordered region spans residues 665 to 728 (PQGSDEEAAA…IVNPRDGSQG (64 aa)).

This sequence belongs to the ARF family. In terms of assembly, homo and heterodimers.

Its subcellular location is the nucleus. Auxin response factors (ARFs) are transcriptional factors that bind specifically to the DNA sequence 5'-TGTCTC-3' found in the auxin-responsive promoter elements (AuxREs). This is Putative auxin response factor 20 (ARF20) from Oryza sativa subsp. japonica (Rice).